Reading from the N-terminus, the 469-residue chain is Cytosolic beta-glucosidase (469 aa).

Substrate contacts are provided by glutamine 17, histidine 120, and asparagine 164. The active-site Proton donor is the glutamate 165. Tyrosine 309 contributes to the substrate binding site. Catalysis depends on glutamate 373, which acts as the Nucleophile. Residues tryptophan 417 and 424-425 (EW) each bind substrate.

It belongs to the glycosyl hydrolase 1 family. Klotho subfamily. The N-terminus is blocked. As to expression, present in hepatocytes (at protein level).

The protein resides in the cytoplasm. Its subcellular location is the cytosol. The catalysed reaction is Hydrolysis of terminal, non-reducing beta-D-glucosyl residues with release of beta-D-glucose.. It catalyses the reaction a beta-D-glucosyl-(1&lt;-&gt;1')-N-acylsphing-4-enine + H2O = an N-acylsphing-4-enine + D-glucose. The enzyme catalyses a beta-D-galactosyl-(1&lt;-&gt;1')-N-acylsphing-4-enine + H2O = an N-acylsphing-4-enine + D-galactose. It carries out the reaction beta-D-glucosyl-(1&lt;-&gt;1)-sphing-4-enine + H2O = sphing-4-enine + D-glucose. The catalysed reaction is beta-D-glucosyl-(1&lt;-&gt;1)-N-octadecanoylsphing-4-enine + H2O = N-octadecanoylsphing-4-enine + D-glucose. It catalyses the reaction beta-D-galactosyl-(1&lt;-&gt;1)-sphing-4-enine + H2O = sphing-4-enine + D-galactose. The enzyme catalyses beta-D-galactosyl-(1&lt;-&gt;1')-N-octadecanoylsphing-4-enine + H2O = N-octadecanoylsphing-4-enine + D-galactose. It carries out the reaction a beta-D-xylosyl-(1&lt;-&gt;1')-N-acylsphing-4-enine + cholesterol = cholesteryl 3-beta-D-xyloside + an N-acylsphing-4-enine. With respect to regulation, inhibited by 2,4-dinitrophenyl-2-fluoro-2-deoxy-beta-D-glucopyranoside. Functionally, neutral cytosolic beta-glycosidase with a broad substrate specificity that could play a role in the catabolism of glycosylceramides. Has a significant glucosylceramidase activity in vitro. However, that activity is relatively low and its significance in vivo is not clear. Hydrolyzes galactosylceramide/GalCer, glucosylsphingosine/GlcSph and galactosylsphingosine/GalSph. However, the in vivo relevance of these activities is unclear. It can also hydrolyze a broad variety of dietary glycosides including phytoestrogens, flavonols, flavones, flavanones and cyanogens in vitro and could therefore play a role in the metabolism of xenobiotics. Possesses transxylosylase activity in vitro using xylosylated ceramides/XylCers (such as beta-D-xylosyl-(1&lt;-&gt;1')-N-acylsphing-4-enine) as xylosyl donors and cholesterol as acceptor. Could also play a role in the catabolism of cytosolic sialyl free N-glycans. This Cavia porcellus (Guinea pig) protein is Cytosolic beta-glucosidase.